The following is a 91-amino-acid chain: Small ribosomal subunit protein uS15 (91 aa).

Belongs to the universal ribosomal protein uS15 family. Part of the 30S ribosomal subunit. Forms a bridge to the 50S subunit in the 70S ribosome, contacting the 23S rRNA.

In terms of biological role, one of the primary rRNA binding proteins, it binds directly to 16S rRNA where it helps nucleate assembly of the platform of the 30S subunit by binding and bridging several RNA helices of the 16S rRNA. Forms an intersubunit bridge (bridge B4) with the 23S rRNA of the 50S subunit in the ribosome. The polypeptide is Small ribosomal subunit protein uS15 (Amoebophilus asiaticus (strain 5a2)).